The sequence spans 118 residues: NAD(P)H-quinone oxidoreductase subunit M (118 aa).

It belongs to the complex I NdhM subunit family. In terms of assembly, NDH-1 can be composed of about 15 different subunits; different subcomplexes with different compositions have been identified which probably have different functions.

It localises to the cellular thylakoid membrane. The catalysed reaction is a plastoquinone + NADH + (n+1) H(+)(in) = a plastoquinol + NAD(+) + n H(+)(out). It carries out the reaction a plastoquinone + NADPH + (n+1) H(+)(in) = a plastoquinol + NADP(+) + n H(+)(out). NDH-1 shuttles electrons from an unknown electron donor, via FMN and iron-sulfur (Fe-S) centers, to quinones in the respiratory and/or the photosynthetic chain. The immediate electron acceptor for the enzyme in this species is believed to be plastoquinone. Couples the redox reaction to proton translocation, and thus conserves the redox energy in a proton gradient. Cyanobacterial NDH-1 also plays a role in inorganic carbon-concentration. This chain is NAD(P)H-quinone oxidoreductase subunit M, found in Trichormus variabilis (strain ATCC 29413 / PCC 7937) (Anabaena variabilis).